The sequence spans 246 residues: Protein-lysine N-methyltransferase EFM6 (246 aa).

S-adenosyl-L-methionine-binding positions include Trp51, 87 to 89 (GSG), Asp115, Trp143, and Ala169.

It belongs to the class I-like SAM-binding methyltransferase superfamily. METTL21 family. EFM6 subfamily.

The protein resides in the cytoplasm. Its function is as follows. S-adenosyl-L-methionine-dependent protein-lysine N-methyltransferase that methylates elongation factor 1-alpha (TEF1 and TEF2) at 'Lys-390'. This is Protein-lysine N-methyltransferase EFM6 from Saccharomyces cerevisiae (strain ATCC 204508 / S288c) (Baker's yeast).